Reading from the N-terminus, the 386-residue chain is Centrosomal protein of 44 kDa (386 aa).

The segment at 11-194 (RKLEQVLRSL…GVPEGTVTST (184 aa)) is binds with microtubules and centrioles. Residues 232-262 (ELTALQIALAECQEKLKKLTWIEKRLECLEA) adopt a coiled-coil conformation. The residue at position 329 (Ser-329) is a Phosphoserine. A coiled-coil region spans residues 359 to 382 (SEETTMQKMERMKKMFEETAELLK).

As to quaternary structure, interacts with CROCC. Interacts with POC1B; the interaction is direct and recruits POC1B to centriolar microtubules. Binds to centriolar microtubules.

Its subcellular location is the cytoplasm. The protein localises to the cytoskeleton. The protein resides in the microtubule organizing center. It is found in the centrosome. It localises to the centriole. Its subcellular location is the spindle pole. The protein localises to the midbody. In terms of biological role, centriole-enriched microtubule-binding protein involved in centriole biogenesis. In collaboration with CEP295 and POC1B, is required for the centriole-to-centrosome conversion by ensuring the formation of bona fide centriole wall. Functions as a linker component that maintains centrosome cohesion. Associates with CROCC and regulates its stability and localization to the centrosome. This chain is Centrosomal protein of 44 kDa (Cep44), found in Rattus norvegicus (Rat).